Here is a 261-residue protein sequence, read N- to C-terminus: Shikimate dehydrogenase (NADP(+)) (261 aa).

Shikimate contacts are provided by residues 13 to 15 and T60; that span reads SLS. K64 functions as the Proton acceptor in the catalytic mechanism. Positions 85 and 100 each coordinate shikimate. Residues 121 to 125 and I202 each bind NADP(+); that span reads GAGGA. Y204 contacts shikimate. Residue G225 participates in NADP(+) binding.

It belongs to the shikimate dehydrogenase family. As to quaternary structure, homodimer.

It carries out the reaction shikimate + NADP(+) = 3-dehydroshikimate + NADPH + H(+). It functions in the pathway metabolic intermediate biosynthesis; chorismate biosynthesis; chorismate from D-erythrose 4-phosphate and phosphoenolpyruvate: step 4/7. Functionally, involved in the biosynthesis of the chorismate, which leads to the biosynthesis of aromatic amino acids. Catalyzes the reversible NADPH linked reduction of 3-dehydroshikimate (DHSA) to yield shikimate (SA). The polypeptide is Shikimate dehydrogenase (NADP(+)) (Exiguobacterium sibiricum (strain DSM 17290 / CCUG 55495 / CIP 109462 / JCM 13490 / 255-15)).